The chain runs to 237 residues: ATP synthase subunit a (237 aa).

The next 5 helical transmembrane spans lie at Leu-17–Ala-37, Phe-75–Pro-95, Asp-112–Val-132, Ile-179–Ile-201, and Gly-214–Ser-234.

Belongs to the ATPase A chain family. F-type ATPases have 2 components, CF(1) - the catalytic core - and CF(0) - the membrane proton channel. CF(1) has five subunits: alpha(3), beta(3), gamma(1), delta(1), epsilon(1). CF(0) has three main subunits: a(1), b(2) and c(9-12). The alpha and beta chains form an alternating ring which encloses part of the gamma chain. CF(1) is attached to CF(0) by a central stalk formed by the gamma and epsilon chains, while a peripheral stalk is formed by the delta and b chains.

The protein resides in the cell membrane. In terms of biological role, key component of the proton channel; it plays a direct role in the translocation of protons across the membrane. The chain is ATP synthase subunit a from Geobacillus kaustophilus (strain HTA426).